The following is a 147-amino-acid chain: Hemoglobin subunit beta (147 aa).

The region spanning 3–147 is the Globin domain; sequence EWTDSERAII…VVSALGREYH (145 aa). Heme b contacts are provided by His-64 and His-93.

It belongs to the globin family. Heterotetramer of two alpha chains and two beta chains. In terms of tissue distribution, red blood cells.

In terms of biological role, involved in oxygen transport from gills to the various peripheral tissues. The polypeptide is Hemoglobin subunit beta (hbb) (Gadus morhua (Atlantic cod)).